The primary structure comprises 146 residues: Hemoglobin subunit beta-2 (146 aa).

Residues 2-146 (EWTDFERATI…VVSSLGRQYH (145 aa)) form the Globin domain. Heme b is bound by residues H63 and H92.

It belongs to the globin family. As to quaternary structure, hb2 is a heterotetramer of two alpha chains and two beta-2 chains. In terms of tissue distribution, red blood cells.

Functionally, involved in oxygen transport from gills to the various peripheral tissues. The protein is Hemoglobin subunit beta-2 (hbb2) of Pseudaphritis urvillii (Congolli).